The chain runs to 131 residues: Maturin (131 aa).

The span at 107 to 120 shows a compositional bias: acidic residues; that stretch reads FEEYNADVEEEEPE. Positions 107 to 131 are disordered; that stretch reads FEEYNADVEEEEPEADHQQMGVSQQ.

This sequence belongs to the MTURN family.

Its subcellular location is the cytoplasm. In terms of biological role, involved in early neuronal development; required for cell cycle exit and differentiation of primary neurons. Cooperates synergistically with pak3 to promote primary neural differentiation within the neural plate. May play a role in promoting megakaryocyte differentiation. In Xenopus laevis (African clawed frog), this protein is Maturin (mturn).